We begin with the raw amino-acid sequence, 478 residues long: MRYEPVIGLELHIQLNTHSKLFSPSSAAFGAEANTHVNEIDLAYPGVLPVLNEQALASAVLFGLALGSRIHSSAVFMRKNYFYPDSPKGYQISQLNDAVILGGQVSIDVDGATQTVRINRGQLEEDAGKSVHDIFSDRTGIDLNRAGVPLIELVSEPDMHSAAAAVAYMRKIHHLVRYLGISDGNMQEGSFRCDANVSIRPVGSKELNARVELKNINSFRFVAQAIQIEIERQSDILDAGGSVEQETRLFDPEKMQTRTMRSKENANDYRYFPDPDLLPLHLSAETIEHIRAQLPELPDARAQRYRKDYQLDDETIAFLVQTRMIADYFDAVVAKCHDAKLAANWISVELARLLNEHHLSFEQNPVSAEQFSQLLLKIHDDTISAQNGKKVLDYLWQHADADVDAVIDTQGLRQISDDQALKTWAAEVLAAYPKQVADYRGGQEKLLGFFVGQVMKKSRGKANPKTVNDIISQMLQAE.

Belongs to the GatB/GatE family. GatB subfamily. As to quaternary structure, heterotrimer of A, B and C subunits.

The catalysed reaction is L-glutamyl-tRNA(Gln) + L-glutamine + ATP + H2O = L-glutaminyl-tRNA(Gln) + L-glutamate + ADP + phosphate + H(+). It catalyses the reaction L-aspartyl-tRNA(Asn) + L-glutamine + ATP + H2O = L-asparaginyl-tRNA(Asn) + L-glutamate + ADP + phosphate + 2 H(+). Allows the formation of correctly charged Asn-tRNA(Asn) or Gln-tRNA(Gln) through the transamidation of misacylated Asp-tRNA(Asn) or Glu-tRNA(Gln) in organisms which lack either or both of asparaginyl-tRNA or glutaminyl-tRNA synthetases. The reaction takes place in the presence of glutamine and ATP through an activated phospho-Asp-tRNA(Asn) or phospho-Glu-tRNA(Gln). In Dichelobacter nodosus (strain VCS1703A), this protein is Aspartyl/glutamyl-tRNA(Asn/Gln) amidotransferase subunit B.